The sequence spans 430 residues: Small ribosomal subunit protein uS5m (430 aa).

Residues 218–282 (FDTRILEVRN…NRAVHHLHYI (65 aa)) enclose the S5 DRBM domain.

This sequence belongs to the universal ribosomal protein uS5 family. As to quaternary structure, component of the mitochondrial small ribosomal subunit (mt-SSU). Mature mammalian 55S mitochondrial ribosomes consist of a small (28S) and a large (39S) subunit. The 28S small subunit contains a 12S ribosomal RNA (12S mt-rRNA) and 30 different proteins. The 39S large subunit contains a 16S rRNA (16S mt-rRNA), a copy of mitochondrial valine transfer RNA (mt-tRNA(Val)), which plays an integral structural role, and 52 different proteins.

Its subcellular location is the mitochondrion. The protein is Small ribosomal subunit protein uS5m (MRPS5) of Homo sapiens (Human).